Consider the following 152-residue polypeptide: Large ribosomal subunit protein bL9 (152 aa).

Belongs to the bacterial ribosomal protein bL9 family.

In terms of biological role, binds to the 23S rRNA. This Prochlorococcus marinus (strain NATL2A) protein is Large ribosomal subunit protein bL9.